A 72-amino-acid chain; its full sequence is Probable protein transport protein Sec61 subunit gamma (72 aa).

At 1 to 40 (MSQKLQKPSFLSEYLRSIRLFSKKCVRPSGKELSMSIKRH) the chain is on the cytoplasmic side. The chain crosses the membrane as a helical span at residues 41–61 (AIGIGFLGILGYAIKLIHIPI). At 62–72 (NNIIVSSPGKE) the chain is on the extracellular side.

The protein belongs to the SecE/SEC61-gamma family. In terms of assembly, heterotrimeric complex composed of SEC61-alpha, SEC61-beta and SEC61-gamma.

It localises to the endoplasmic reticulum membrane. In terms of biological role, necessary for protein translocation in the endoplasmic reticulum. The sequence is that of Probable protein transport protein Sec61 subunit gamma from Encephalitozoon cuniculi (strain GB-M1) (Microsporidian parasite).